Reading from the N-terminus, the 916-residue chain is Protein translocase subunit SecA (916 aa).

Residues Gln87, 105–109, and Asp507 contribute to the ATP site; that span reads GEGKT. Residues Cys900, Cys902, Cys911, and His912 each contribute to the Zn(2+) site.

This sequence belongs to the SecA family. In terms of assembly, monomer and homodimer. Part of the essential Sec protein translocation apparatus which comprises SecA, SecYEG and auxiliary proteins SecDF-YajC and YidC. Zn(2+) serves as cofactor.

It localises to the cell inner membrane. The protein localises to the cytoplasm. It carries out the reaction ATP + H2O + cellular proteinSide 1 = ADP + phosphate + cellular proteinSide 2.. Its function is as follows. Part of the Sec protein translocase complex. Interacts with the SecYEG preprotein conducting channel. Has a central role in coupling the hydrolysis of ATP to the transfer of proteins into and across the cell membrane, serving both as a receptor for the preprotein-SecB complex and as an ATP-driven molecular motor driving the stepwise translocation of polypeptide chains across the membrane. This Neisseria meningitidis serogroup A / serotype 4A (strain DSM 15465 / Z2491) protein is Protein translocase subunit SecA.